Reading from the N-terminus, the 125-residue chain is Ribonuclease P protein component (125 aa).

This sequence belongs to the RnpA family. In terms of assembly, consists of a catalytic RNA component (M1 or rnpB) and a protein subunit.

The enzyme catalyses Endonucleolytic cleavage of RNA, removing 5'-extranucleotides from tRNA precursor.. Functionally, RNaseP catalyzes the removal of the 5'-leader sequence from pre-tRNA to produce the mature 5'-terminus. It can also cleave other RNA substrates such as 4.5S RNA. The protein component plays an auxiliary but essential role in vivo by binding to the 5'-leader sequence and broadening the substrate specificity of the ribozyme. The sequence is that of Ribonuclease P protein component from Clostridium perfringens (strain ATCC 13124 / DSM 756 / JCM 1290 / NCIMB 6125 / NCTC 8237 / Type A).